The sequence spans 220 residues: Small ribosomal subunit protein uS3c (220 aa).

Positions 48-119 constitute a KH type-2 domain; the sequence is VQKHTNNPFH…KLCLILIKID (72 aa).

Belongs to the universal ribosomal protein uS3 family. In terms of assembly, part of the 30S ribosomal subunit.

It is found in the plastid. Its subcellular location is the chloroplast. The protein is Small ribosomal subunit protein uS3c (rps3) of Psilotum nudum (Whisk fern).